The following is an 88-amino-acid chain: SPbeta prophage-derived protein BhlB (88 aa).

2 consecutive transmembrane segments (helical) span residues L15–I35 and D45–F65.

The protein belongs to the SPP1 holin family.

The protein resides in the cell membrane. Its function is as follows. May be involved in the secretion of the autolysin BlyA. The sequence is that of SPbeta prophage-derived protein BhlB (bhlB) from Bacillus subtilis (strain 168).